We begin with the raw amino-acid sequence, 542 residues long: MLO-like protein 7 (542 aa).

Topologically, residues 1–38 are extracellular; that stretch reads MITRSRCRRSLLWFLVFHGGATATGAPSGGKELSQTPT. A helical membrane pass occupies residues 39–59; it reads WAVAVVCTFLILISHLLEKGL. Topologically, residues 60 to 82 are cytoplasmic; that stretch reads QRLANWLWKKHKNSLLEALEKIK. The chain crosses the membrane as a helical span at residues 83–103; the sequence is AELMILGFISLLLTFGEPYIL. The Extracellular portion of the chain corresponds to 104–165; it reads KICVPRKAAL…ITLKGLHQLH (62 aa). The helical transmembrane segment at 166-186 threads the bilayer; that stretch reads ILLFFLAIFHIVYSLITMMLS. The Cytoplasmic portion of the chain corresponds to 187 to 288; sequence RLKIRGWKKW…IKRSLEDDFK (102 aa). A helical transmembrane segment spans residues 289-309; the sequence is LVVGISPVLWASFVIFLLFNV. The Extracellular segment spans residues 310–315; it reads NGWRTL. The helical transmembrane segment at 316–336 threads the bilayer; sequence FWASIPPLLIILAVGTKLQAI. Residues 337–374 are Cytoplasmic-facing; it reads MATMALEIVETHAVVQGMPLVQGSDRYFWFDCPQLLLH. The helical transmembrane segment at 375-395 threads the bilayer; that stretch reads LIHFALFQNAFQITHFFWIWY. Topologically, residues 396-414 are extracellular; it reads SFGLKSCFHKDFNLVVSKL. A helical transmembrane segment spans residues 415 to 435; sequence FLCLGALILCSYITLPLYALV. The Cytoplasmic segment spans residues 436 to 542; that stretch reads TQMGSHMKKA…QQQEMQFHNS (107 aa). Residues 449 to 470 are calmodulin-binding; sequence EQMAKALKKWHKDIKLKKGKAR.

Belongs to the MLO family. As to expression, restricted to pollen, synergids, pistils and immature anthers. Also detected in seedlings, leaves, stems and inflorescens.

The protein localises to the cell membrane. It localises to the endomembrane system. Functionally, may be involved in modulation of pathogen defense and leaf cell death. Activity seems to be regulated by Ca(2+)-dependent calmodulin binding and seems not to require heterotrimeric G proteins. Controls pollen tube reception in the female gametophyte synergids. The sequence is that of MLO-like protein 7 (MLO7) from Arabidopsis thaliana (Mouse-ear cress).